The sequence spans 125 residues: Class III hydrophobin G (125 aa).

A signal peptide spans 1 to 20 (MKPSIVTFLMLAAVTAAVSA). Cystine bridges form between Cys54–Cys107, Cys60–Cys101, Cys61–Cys94, and Cys108–Cys122.

This sequence belongs to the fungal hydrophobin family. In terms of assembly, self-assembles to form functional amyloid fibrils called rodlets. Self-assembly into fibrillar rodlets occurs spontaneously at hydrophobic:hydrophilic interfaces and the rodlets further associate laterally to form amphipathic monolayers.

The protein resides in the secreted. It is found in the cell wall. Aerial growth, conidiation, and dispersal of filamentous fungi in the environment rely upon a capability of their secreting small amphipathic proteins called hydrophobins (HPBs) with low sequence identity. Class I can self-assemble into an outermost layer of rodlet bundles on aerial cell surfaces, conferring cellular hydrophobicity that supports fungal growth, development and dispersal; whereas Class II form highly ordered films at water-air interfaces through intermolecular interactions but contribute nothing to the rodlet structure. RodF and rodG belong to Class III, which contains hydrophobins with intermediate (between classes I and II) or atypical characteristics. RodG, unlike rodA, is not required for rodlet formation. In Aspergillus fumigatus (strain ATCC MYA-4609 / CBS 101355 / FGSC A1100 / Af293) (Neosartorya fumigata), this protein is Class III hydrophobin G.